Here is a 453-residue protein sequence, read N- to C-terminus: Zinc finger and BTB domain-containing protein 44 (453 aa).

A Glycyl lysine isopeptide (Lys-Gly) (interchain with G-Cter in SUMO2) cross-link involves residue K4. Positions 31 to 98 constitute a BTB domain; it reads CDITIRVQDK…AYTATLSINT (68 aa). S135 is subject to Phosphoserine. Positions 135–157 are disordered; it reads SQPEKSLDAGQENSSNCNFTSRD. Positions 145–157 are enriched in polar residues; that stretch reads QENSSNCNFTSRD. Phosphoserine occurs at positions 159, 161, 165, 191, 194, and 199. T200 carries the phosphothreonine modification. Residues 241 to 266 are disordered; the sequence is QPEKAKQAENTRTLELPGPSEAGRRV. K290 is covalently cross-linked (Glycyl lysine isopeptide (Lys-Gly) (interchain with G-Cter in SUMO2)). Disordered stretches follow at residues 295–324 and 336–366; these read SDEE…PGSE and SSSI…ADDD. Low complexity predominate over residues 304–318; sequence SQPVSASQSSLSDQQ. Positions 352–361 are enriched in polar residues; that stretch reads TLQSTSSTNA. 2 consecutive C2H2-type zinc fingers follow at residues 399-421 and 427-449; these read FQCP…MLIH and FQCD…RLKH.

It is found in the nucleus. In Mus musculus (Mouse), this protein is Zinc finger and BTB domain-containing protein 44 (Zbtb44).